Here is a 230-residue protein sequence, read N- to C-terminus: Ion-translocating oxidoreductase complex subunit E (230 aa).

5 consecutive transmembrane segments (helical) span residues 22–42 (LLGL…LGLG), 63–83 (TPAE…VSAV), 86–106 (LINA…PLIV), 125–145 (WLSA…MFVL), and 182–202 (PFLL…MLAV).

This sequence belongs to the NqrDE/RnfAE family. In terms of assembly, the complex is composed of six subunits: RsxA, RsxB, RsxC, RsxD, RsxE and RsxG.

The protein resides in the cell inner membrane. Part of a membrane-bound complex that couples electron transfer with translocation of ions across the membrane. Required to maintain the reduced state of SoxR. This is Ion-translocating oxidoreductase complex subunit E from Salmonella paratyphi A (strain ATCC 9150 / SARB42).